The chain runs to 213 residues: Glycerol-3-phosphate acyltransferase (213 aa).

6 helical membrane passes run 2-22 (ITIVLLILAYLLGSIPSGLWI), 52-74 (AGMATFVIDFFKGTLATLLPIIF), 81-100 (PLIFGLLAVIGHTFPIFAGF), 112-132 (VIFGFAPIFCLYLAIIFFGAL), 143-163 (VTASIAAVIGVLLFPLFGFIL), and 164-184 (SNYDFLFIAIILALASLIIIR).

This sequence belongs to the PlsY family. In terms of assembly, probably interacts with PlsX.

Its subcellular location is the cell membrane. The catalysed reaction is an acyl phosphate + sn-glycerol 3-phosphate = a 1-acyl-sn-glycero-3-phosphate + phosphate. Its pathway is lipid metabolism; phospholipid metabolism. In terms of biological role, catalyzes the transfer of an acyl group from acyl-phosphate (acyl-PO(4)) to glycerol-3-phosphate (G3P) to form lysophosphatidic acid (LPA). This enzyme utilizes acyl-phosphate as fatty acyl donor, but not acyl-CoA or acyl-ACP. In Streptococcus pneumoniae (strain CGSP14), this protein is Glycerol-3-phosphate acyltransferase.